Here is a 192-residue protein sequence, read N- to C-terminus: Transcription termination/antitermination protein NusG (192 aa).

One can recognise a KOW domain in the interval Val140–Leu168.

Belongs to the NusG family.

Functionally, participates in transcription elongation, termination and antitermination. The protein is Transcription termination/antitermination protein NusG of Rickettsia conorii (strain ATCC VR-613 / Malish 7).